We begin with the raw amino-acid sequence, 90 residues long: uncharacterized protein (90 aa).

The first 26 residues, 1–26, serve as a signal peptide directing secretion; that stretch reads MFESEAELRRIRIALVWIAVFLLFGA.

This is an uncharacterized protein from Bacillus subtilis (strain 168).